The sequence spans 1306 residues: Synergin gamma (1306 aa).

Residues M113–S153 are a coiled coil. Disordered stretches follow at residues G176–P196 and S252–S285. Residues E258–S272 are compositionally biased toward basic and acidic residues. An EH domain is found at N293–P404. The DFXDF motif 1 motif lies at D455–F459. Residues Q460–P494 form a disordered region. S471 is subject to Phosphoserine. Residue K509 is modified to N6-acetyllysine. The interaction with AP1G1 stretch occupies residues K514 to S778. The segment at S559–Q601 is disordered. S576 carries the phosphoserine modification. The interaction with AP1G1, AP1G2 and GGA1 stretch occupies residues L661–E673. The DFXDF motif 2 signature appears at D685–F689. Residues I697–P730 are disordered. Positions K702–V714 are enriched in basic and acidic residues. A Phosphoserine modification is found at S715. At K736 the chain carries N6-acetyllysine. Phosphoserine occurs at positions 744 and 764. The DFXDF motif 3 motif lies at D767 to F771. Residues S804, S844, S847, S901, S911, S927, S974, S998, S1065, S1067, S1079, and S1090 each carry the phosphoserine modification. Disordered regions lie at residues P986–F1016 and S1065–S1090. Residues E993 to S1005 show a composition bias toward polar residues. Position 1092 is a phosphothreonine (T1092).

In terms of assembly, self-associates. Interacts with GGA1 (via GAE domain). Interacts with GGA2 and GGA3. Interacts with AP1G1 (via GAE domain), a subunit of adapter protein complex AP-1. Interacts with AP1G2 (via GAE domain) a subunit of adapter protein complex AP-1. Component of the aftiphilin/p200/gamma-synergin complex, at least composed of AFTPH/aftiphilin, HEATR5B/p200a and SYNRG/gamma-synergin, which plays a role in the AP1G1/AP-1-mediated trafficking of transferrin from early to recycling endosomes. Within the complex interacts with AFTPH/aftiphilin and HEATR5B/p200a; the interactions are direct. Interacts (via EH domain) with SCAMP1.

The protein resides in the cytoplasm. Its subcellular location is the cytosol. It localises to the golgi apparatus. It is found in the trans-Golgi network membrane. The protein localises to the perinuclear region. The protein resides in the cytoplasmic vesicle. Its subcellular location is the clathrin-coated vesicle. In terms of biological role, plays a role in endocytosis and/or membrane trafficking at the trans-Golgi network (TGN). May act by linking the adapter protein complex AP-1 to other proteins. Component of clathrin-coated vesicles. Component of the aftiphilin/p200/gamma-synergin complex, which plays roles in AP1G1/AP-1-mediated protein trafficking including the trafficking of transferrin from early to recycling endosomes, and the membrane trafficking of furin and the lysosomal enzyme cathepsin D between the trans-Golgi network (TGN) and endosomes. In Mus musculus (Mouse), this protein is Synergin gamma (Synrg).